A 91-amino-acid chain; its full sequence is Acylphosphatase (91 aa).

The Acylphosphatase-like domain occupies 5 to 91; that stretch reads RAHLRIYGRV…EGLEGFKVVG (87 aa). Catalysis depends on residues R20 and N38.

This sequence belongs to the acylphosphatase family.

The enzyme catalyses an acyl phosphate + H2O = a carboxylate + phosphate + H(+). The chain is Acylphosphatase (acyP) from Thermococcus kodakarensis (strain ATCC BAA-918 / JCM 12380 / KOD1) (Pyrococcus kodakaraensis (strain KOD1)).